We begin with the raw amino-acid sequence, 245 residues long: Orotidine 5'-phosphate decarboxylase (245 aa).

Residues D22, K44, 71-80, T131, R192, Q201, G221, and R222 contribute to the substrate site; that span reads DLKFHDIPNT. K73 functions as the Proton donor in the catalytic mechanism.

Belongs to the OMP decarboxylase family. Type 1 subfamily. In terms of assembly, homodimer.

It catalyses the reaction orotidine 5'-phosphate + H(+) = UMP + CO2. It participates in pyrimidine metabolism; UMP biosynthesis via de novo pathway; UMP from orotate: step 2/2. Catalyzes the decarboxylation of orotidine 5'-monophosphate (OMP) to uridine 5'-monophosphate (UMP). The chain is Orotidine 5'-phosphate decarboxylase from Escherichia coli O157:H7.